A 272-amino-acid chain; its full sequence is HMP-PP phosphatase (272 aa).

Aspartate 8 (nucleophile) is an active-site residue. Residues aspartate 8, aspartate 10, and aspartate 212 each contribute to the Mg(2+) site.

Belongs to the HAD-like hydrolase superfamily. Cof family. Mg(2+) is required as a cofactor.

The catalysed reaction is 4-amino-2-methyl-5-(diphosphooxymethyl)pyrimidine + H2O = 4-amino-2-methyl-5-(phosphooxymethyl)pyrimidine + phosphate + H(+). Functionally, catalyzes the hydrolysis of 4-amino-2-methyl-5-hydroxymethylpyrimidine pyrophosphate (HMP-PP) to 4-amino-2-methyl-5-hydroxymethylpyrimidine phosphate (HMP-P). The chain is HMP-PP phosphatase from Salmonella arizonae (strain ATCC BAA-731 / CDC346-86 / RSK2980).